We begin with the raw amino-acid sequence, 162 residues long: Protein lon-8 (162 aa).

A signal peptide spans 1–23 (MRNSRFCAILAVISAISVSYVLA).

Its subcellular location is the secreted. Its function is as follows. Secreted protein that is involved in larval elongation, early adult growth and male tail development. This chain is Protein lon-8, found in Caenorhabditis elegans.